Consider the following 357-residue polypeptide: MKASVYDFTLKELSQLLKPSFRAKQLYLWLYAKYKTSFKDMQNNFSKDFIAYLEREFTLRTIEIAHVRKSIDGSKKYLFKSLRDNHTFEAVLLKMKDKKIDEETNAILEGEKYTVCVSCQIGCQVGCTFCFTQKGGFVRNLKASEIIQQALLIKEDNNLPIEKALNIVFMGMGEPLNNLDEVCKAIEIFNTGMQISPKRITISTSGVADKIPILAGKNLGVQLAISLHAVDDKTRSSLMPLNKKYNIECVLNEVRKWPLEQRKRVMFEYLLIKDLNDSLDCAKKLLKLLNGIKSKVNLILFNPHEGSKFERPSLESARMFADFLNSKGLLCTIRESKALDIEAACGQLREKKLSQQI.

The Proton acceptor role is filled by Glu89. The Radical SAM core domain occupies 109–340 (EGEKYTVCVS…CTIRESKALD (232 aa)). Cys116 and Cys345 are disulfide-bonded. Positions 123, 127, and 130 each coordinate [4Fe-4S] cluster. S-adenosyl-L-methionine-binding positions include 173–174 (GE), Ser203, 226–228 (SLH), and Asn302. Cys345 functions as the S-methylcysteine intermediate in the catalytic mechanism.

It belongs to the radical SAM superfamily. RlmN family. It depends on [4Fe-4S] cluster as a cofactor.

It localises to the cytoplasm. The enzyme catalyses adenosine(2503) in 23S rRNA + 2 reduced [2Fe-2S]-[ferredoxin] + 2 S-adenosyl-L-methionine = 2-methyladenosine(2503) in 23S rRNA + 5'-deoxyadenosine + L-methionine + 2 oxidized [2Fe-2S]-[ferredoxin] + S-adenosyl-L-homocysteine. The catalysed reaction is adenosine(37) in tRNA + 2 reduced [2Fe-2S]-[ferredoxin] + 2 S-adenosyl-L-methionine = 2-methyladenosine(37) in tRNA + 5'-deoxyadenosine + L-methionine + 2 oxidized [2Fe-2S]-[ferredoxin] + S-adenosyl-L-homocysteine. Specifically methylates position 2 of adenine 2503 in 23S rRNA and position 2 of adenine 37 in tRNAs. m2A2503 modification seems to play a crucial role in the proofreading step occurring at the peptidyl transferase center and thus would serve to optimize ribosomal fidelity. The polypeptide is Dual-specificity RNA methyltransferase RlmN (Helicobacter pylori (strain G27)).